A 64-amino-acid chain; its full sequence is Large ribosomal subunit protein bL28 (64 aa).

The protein belongs to the bacterial ribosomal protein bL28 family.

The sequence is that of Large ribosomal subunit protein bL28 from Desulfotalea psychrophila (strain LSv54 / DSM 12343).